The primary structure comprises 500 residues: Na(+)/H(+) antiporter NhaB (500 aa).

A run of 12 helical transmembrane segments spans residues 34–54 (LLLA…QFIF), 58–78 (MALK…ALLL), 96–116 (VILL…LLLF), 129–149 (AVLS…LDAL), 150–170 (TVTA…HRVA), 205–225 (LLMH…VGEP), 241–261 (FFLK…VTCV), 311–331 (ILIV…LMVI), 350–370 (FQDA…VAVI), 394–414 (MLYL…VATI), 450–470 (ATPN…APLI), and 477–497 (MVWM…WAVT).

Belongs to the NhaB Na(+)/H(+) (TC 2.A.34) antiporter family.

The protein resides in the cell inner membrane. It carries out the reaction 2 Na(+)(in) + 3 H(+)(out) = 2 Na(+)(out) + 3 H(+)(in). In terms of biological role, na(+)/H(+) antiporter that extrudes sodium in exchange for external protons. This Pseudomonas entomophila (strain L48) protein is Na(+)/H(+) antiporter NhaB.